Consider the following 61-residue polypeptide: Small ribosomal subunit protein uS14 (61 aa).

Positions 24, 27, 40, and 43 each coordinate Zn(2+).

This sequence belongs to the universal ribosomal protein uS14 family. Zinc-binding uS14 subfamily. In terms of assembly, part of the 30S ribosomal subunit. Contacts proteins S3 and S10. Requires Zn(2+) as cofactor.

Its function is as follows. Binds 16S rRNA, required for the assembly of 30S particles and may also be responsible for determining the conformation of the 16S rRNA at the A site. The polypeptide is Small ribosomal subunit protein uS14 (Nitratiruptor sp. (strain SB155-2)).